We begin with the raw amino-acid sequence, 386 residues long: Protein-glutamate methylesterase/protein-glutamine glutaminase 3 (386 aa).

A Response regulatory domain is found at Lys4–Leu121. Asp55 carries the post-translational modification 4-aspartylphosphate. Residues Ser132–Ser194 are compositionally biased toward low complexity. Residues Ser132–Ala197 are disordered. The 193-residue stretch at Pro191–Glu383 folds into the CheB-type methylesterase domain. Residues Ser210, His237, and Asp330 contribute to the active site.

This sequence belongs to the CheB family. Post-translationally, phosphorylated by CheA. Phosphorylation of the N-terminal regulatory domain activates the methylesterase activity.

Its subcellular location is the cytoplasm. The enzyme catalyses [protein]-L-glutamate 5-O-methyl ester + H2O = L-glutamyl-[protein] + methanol + H(+). It carries out the reaction L-glutaminyl-[protein] + H2O = L-glutamyl-[protein] + NH4(+). Its function is as follows. Involved in chemotaxis. Part of a chemotaxis signal transduction system that modulates chemotaxis in response to various stimuli. Catalyzes the demethylation of specific methylglutamate residues introduced into the chemoreceptors (methyl-accepting chemotaxis proteins or MCP) by CheR. Also mediates the irreversible deamidation of specific glutamine residues to glutamic acid. The polypeptide is Protein-glutamate methylesterase/protein-glutamine glutaminase 3 (Pseudomonas syringae pv. syringae (strain B728a)).